The sequence spans 473 residues: MRKQRFNPYLPSWEYIPDAEPYVFNGRVYIYGSHDRFNGHAFCLNDYVCWSAPVDDLSEWRYEGVIYRKTDDPLNPDGRMCLYAPDVTLGPDGRYYLYYVLDKVPVVSVAVCDTPAGKYEFYGYVRYADGTRLGEREGDWPQFDPAVLTEGERTYLYTGFCPKGDKSRKGAMATVLGPDMLTVVEEPVIIVPSEPYSRGSGFEGHEFFEAPSIRKKGDTYYFIYSSVVMHELCYATSKHPTKGFKYGGVIVSNCDLHIDSYKPAEKPMYYGGNNHGSIVEINGEWYIFYHRHTNGTSFSRQGCMEKIKILEDGSIPQVEMTSCGSADEPLPGRGEYPAYIACNLFCGEESVYTDLTGAWMNNQFPKITQDGKDGDEEPGYIANMKDSATAGFKYFDCKGIKSVKIKVRGYCRGVFEVKTSWNGEVLGKIPVEFSNIWTEFSASIPIPDGIHALYFTYRGSGSASLKSFTLCTD.

Asp18 serves as the catalytic Proton acceptor. Glu209 (proton donor) is an active-site residue.

It belongs to the glycosyl hydrolase 43 family. Homotetramer.

It catalyses the reaction Hydrolysis of (1-&gt;4)-beta-D-xylans, to remove successive D-xylose residues from the non-reducing termini.. The enzyme catalyses Hydrolysis of terminal non-reducing alpha-L-arabinofuranoside residues in alpha-L-arabinosides.. The sequence is that of Xylosidase/arabinosidase (xylA) from Thermoclostridium stercorarium (Clostridium stercorarium).